The primary structure comprises 418 residues: Protein FAM53A (418 aa).

Disordered stretches follow at residues 198–236 and 248–269; these read TSPV…FNPR and ETGN…LSRR. Residues 205-229 show a composition bias toward low complexity; sequence SSASSGFVDSSEGSTSSSTRWNSGG. A compositionally biased stretch (polar residues) spans 248 to 265; that stretch reads ETGNLLPSANSTPTSTPE. The Nuclear localization signal motif lies at 285 to 293; sequence KKSRLKRRR.

This sequence belongs to the FAM53 family.

It is found in the nucleus. May play an important role in neural development; the dorsomedial roof of the third ventricle. In Gallus gallus (Chicken), this protein is Protein FAM53A.